A 289-amino-acid chain; its full sequence is Acetyl-coenzyme A carboxylase carboxyl transferase subunit beta (289 aa).

Residues 24–289 (LWIKCPESGE…NSPRRAPIPA (266 aa)) enclose the CoA carboxyltransferase N-terminal domain.

The protein belongs to the AccD/PCCB family. As to quaternary structure, acetyl-CoA carboxylase is a heterohexamer composed of biotin carboxyl carrier protein (AccB), biotin carboxylase (AccC) and two subunits each of ACCase subunit alpha (AccA) and ACCase subunit beta (AccD).

The protein localises to the cytoplasm. The catalysed reaction is N(6)-carboxybiotinyl-L-lysyl-[protein] + acetyl-CoA = N(6)-biotinyl-L-lysyl-[protein] + malonyl-CoA. The protein operates within lipid metabolism; malonyl-CoA biosynthesis; malonyl-CoA from acetyl-CoA: step 1/1. Its function is as follows. Component of the acetyl coenzyme A carboxylase (ACC) complex. Biotin carboxylase (BC) catalyzes the carboxylation of biotin on its carrier protein (BCCP) and then the CO(2) group is transferred by the transcarboxylase to acetyl-CoA to form malonyl-CoA. The polypeptide is Acetyl-coenzyme A carboxylase carboxyl transferase subunit beta (Beijerinckia indica subsp. indica (strain ATCC 9039 / DSM 1715 / NCIMB 8712)).